A 555-amino-acid chain; its full sequence is Chaperonin GroEL (555 aa).

ATP-binding positions include 29–32, Lys-50, 86–90, Gly-418, and Asp-499; these read TLGP and DGTTT. The disordered stretch occupies residues 528-555; it reads HEEDNNTGNRSGGGVGGGHHGGMGGMDF. The segment covering 537 to 555 has biased composition (gly residues); the sequence is RSGGGVGGGHHGGMGGMDF.

The protein belongs to the chaperonin (HSP60) family. Forms a cylinder of 14 subunits composed of two heptameric rings stacked back-to-back. Interacts with the co-chaperonin GroES.

It is found in the cytoplasm. The enzyme catalyses ATP + H2O + a folded polypeptide = ADP + phosphate + an unfolded polypeptide.. In terms of biological role, together with its co-chaperonin GroES, plays an essential role in assisting protein folding. The GroEL-GroES system forms a nano-cage that allows encapsulation of the non-native substrate proteins and provides a physical environment optimized to promote and accelerate protein folding. The sequence is that of Chaperonin GroEL from Orientia tsutsugamushi (strain Ikeda) (Rickettsia tsutsugamushi).